Here is a 376-residue protein sequence, read N- to C-terminus: Putative glutamate--cysteine ligase 2 (376 aa).

It belongs to the glutamate--cysteine ligase type 2 family. YbdK subfamily.

The catalysed reaction is L-cysteine + L-glutamate + ATP = gamma-L-glutamyl-L-cysteine + ADP + phosphate + H(+). In terms of biological role, ATP-dependent carboxylate-amine ligase which exhibits weak glutamate--cysteine ligase activity. The protein is Putative glutamate--cysteine ligase 2 of Corynebacterium glutamicum (strain R).